The chain runs to 346 residues: Actin-like protein 10 (346 aa).

This sequence belongs to the actin family.

The protein is Actin-like protein 10 (Actl10) of Mus musculus (Mouse).